Consider the following 299-residue polypeptide: RGG repeats nuclear RNA binding protein A (299 aa).

Residues 1–21 (RGGGRGGPRGGGRGRGPGRGR) show a composition bias toward gly residues. Disordered stretches follow at residues 1-173 (RGGG…KEMT) and 232-299 (EAVE…LVAK). Over residues 45–60 (RVQEDGESGKLSERRG) the composition is skewed to basic and acidic residues. Positions 61 to 78 (GYGGPRGGFHGGRRGGFN) are enriched in gly residues. Composition is skewed to basic and acidic residues over residues 86 to 98 (EGERPRRVFDRRS) and 134 to 146 (DGEKIVEAEKEAG). The short motif at 88 to 98 (ERPRRVFDRRS) is the Arginine-rich RNA-binding motif E-R-P-R-R-X-[F/Y]-[E/D]-R-R-S element. Over residues 267–278 (RGRGGFGGGVGG) the composition is skewed to gly residues.

This sequence belongs to the SERBP1-HABP4 family. Expressed in seedlings but not in roots.

It localises to the nucleus. It is found in the cytoplasm. The protein localises to the perinuclear region. Ribosome-binding protein that acts as a regulator of mRNA translation by promoting ribosome inactivation. Binds RNA. The sequence is that of RGG repeats nuclear RNA binding protein A from Nicotiana tabacum (Common tobacco).